Consider the following 1301-residue polypeptide: Tyrosine-protein phosphatase 99A (1301 aa).

A signal peptide spans 1 to 28; that stretch reads MPRPQHHALLRAMLKLLLFASIAEHCAT. Residues 29–394 are Extracellular-facing; it reads ALPTNSSNSP…RQSHNDYNLA (366 aa). Positions 31–63 are disordered; it reads PTNSSNSPSSPSPFTVASLPPTTASSSSSPAVI. The N-linked (GlcNAc...) asparagine glycan is linked to Asn-33. A compositionally biased stretch (low complexity) spans 33–63; that stretch reads NSSNSPSSPSPFTVASLPPTTASSSSSPAVI. Fibronectin type-III domains follow at residues 66–165, 173–269, and 270–376; these read SSFD…YAAV, KPQN…TDVG, and GPSA…LQPN. N-linked (GlcNAc...) asparagine glycans are attached at residues Asn-176, Asn-212, Asn-278, Asn-322, and Asn-336. The chain crosses the membrane as a helical span at residues 395 to 415; that stretch reads VLVGIIFSCFGIILIIMAFFL. The Cytoplasmic portion of the chain corresponds to 416–1301; the sequence is WSRKCFHAAY…TDAQNLDIVG (886 aa). 2 Tyrosine-protein phosphatase domains span residues 476-741 and 764-1016; these read FSRE…LVEA and LEQQ…LSFL. Cys-682 (phosphocysteine intermediate) is an active-site residue. Polar residues predominate over residues 1092–1106; sequence TALNETVSTPSTDTN. 2 disordered regions span residues 1092–1199 and 1257–1281; these read TALN…PTIP and VGDLLMNNADNSPTASPTITNNNHI. The span at 1107–1130 shows a compositional bias: low complexity; that stretch reads PSLLPILSLLPPTVAPLSSSSSTT. A compositionally biased stretch (pro residues) spans 1131–1142; sequence PPTPSTPTPQPP. The segment covering 1150 to 1161 has biased composition (polar residues); sequence HSPSDLSHQISS. Over residues 1162 to 1188 the composition is skewed to low complexity; the sequence is TVANAASPVTPATASASAGATPTTPMT. Residues 1264-1273 are compositionally biased toward polar residues; the sequence is NADNSPTASP.

The protein belongs to the protein-tyrosine phosphatase family. Receptor class subfamily. As to expression, selectively expressed in a subset of axons and pioneer neurons (including aCC and RP2) in the embryo.

Its subcellular location is the membrane. The catalysed reaction is O-phospho-L-tyrosyl-[protein] + H2O = L-tyrosyl-[protein] + phosphate. Functionally, may play a key role in signal transduction and growth control. May have a role in the establishment of the intersegmental and segmental nerves. This Drosophila melanogaster (Fruit fly) protein is Tyrosine-protein phosphatase 99A (Ptp99A).